Reading from the N-terminus, the 232-residue chain is Alpha N-terminal protein methyltransferase 1 (232 aa).

S-adenosyl-L-methionine contacts are provided by residues G71, R76, 123–124 (MQ), and Q139.

This sequence belongs to the methyltransferase superfamily. NTM1 family.

The protein localises to the cytoplasm. The enzyme catalyses N-terminal L-alanyl-L-prolyl-L-lysyl-[protein] + 3 S-adenosyl-L-methionine = N-terminal N,N,N-trimethyl-L-alanyl-L-prolyl-L-lysyl-[protein] + 3 S-adenosyl-L-homocysteine + 3 H(+). It catalyses the reaction N-terminal L-seryl-L-prolyl-L-lysyl-[protein] + 3 S-adenosyl-L-methionine = N-terminal N,N,N-trimethyl-L-seryl-L-prolyl-L-lysyl-[protein] + 3 S-adenosyl-L-homocysteine + 3 H(+). It carries out the reaction N-terminal L-prolyl-L-prolyl-L-lysyl-[protein] + 2 S-adenosyl-L-methionine = N-terminal N,N-dimethyl-L-prolyl-L-prolyl-L-lysyl-[protein] + 2 S-adenosyl-L-homocysteine + 2 H(+). Functionally, alpha-N-methyltransferase that methylates the N-terminus of target proteins containing the N-terminal motif [Ala/Pro/Ser]-Pro-Lys when the initiator Met is cleaved. Specifically catalyzes mono-, di- or tri-methylation of exposed alpha-amino group of Ala or Ser residue in the [Ala/Ser]-Pro-Lys motif and mono- or di-methylation of Pro in the Pro-Pro-Lys motif. Responsible for the N-terminal methylation of the ribosomal proteins RPL12A, RPL12B, RPS25A and RPS25B. This chain is Alpha N-terminal protein methyltransferase 1 (TAE1), found in Saccharomyces cerevisiae (strain ATCC 204508 / S288c) (Baker's yeast).